The chain runs to 477 residues: MAQEKKKGGVLPPDGGWGWMIVAGCFVVTVCTRAVTRCISIFFVEFQMHFAKDYSGTAWIHSLVDCTTMLCAPLGSLIGNQLSCRIAVILGGFLASVGLVLSSFATSLEYLYATLGLLTGLGFALCYTPAIAMVGIYFCERKALAYGIAMSGSGIGTFILAPVVQLLIEHYSWRGALLILGGFVLNLCVCGALLRPIILKEEEACPLPVDSECGYSVKPPTLNGGPTRSAASDAKQRCFQSMQEYHFLLMPDFLVLAGSFLLLASGCSLPFVYLVPYALDVGVGHQHAAFLMSILGVIDIVGNITFGWLTDRRCLKKYRNICYMFAVGMEGLCCLFIPLLRTFVWLVPFSVLYGYFDGAYVALIPVVTSDVVGRQYLSSALGVVYFLHAVPYLVSPPIGGWLVDTTGTYTATFFLSGFALISSSLLLFSVAIIRYCQRNQKKNSLSKIPKLVSCEGKQVDYYPPKNKDLMLIIPATS.

Residues 1–9 are Cytoplasmic-facing; the sequence is MAQEKKKGG. 12 helical membrane-spanning segments follow: residues 10 to 30, 58 to 78, 86 to 106, 116 to 136, 148 to 168, 178 to 198, 253 to 273, 289 to 309, 320 to 340, 344 to 364, 383 to 403, and 413 to 433; these read VLPP…VVTV, AWIH…GSLI, IAVI…SFAT, GLLT…MVGI, IAMS…QLLI, LILG…RPII, FLVL…PFVY, AFLM…FGWL, NICY…IPLL, VWLV…VALI, VVYF…GWLV, and FFLS…VAII. Residues 434–477 are Cytoplasmic-facing; sequence RYCQRNQKKNSLSKIPKLVSCEGKQVDYYPPKNKDLMLIIPATS.

The protein belongs to the major facilitator superfamily. Monocarboxylate porter (TC 2.A.1.13) family.

It is found in the cell membrane. Its subcellular location is the basolateral cell membrane. The catalysed reaction is creatine(in) = creatine(out). It carries out the reaction guanidinoacetate(in) = guanidinoacetate(out). Functionally, functions as a transporter for creatine and as well for its precursor guanidinoacetate. Transport of creatine and GAA is independent of resting membrane potential and extracellular Na(+), Cl(-), or pH. Contributes to the process of creatine biosynthesis and distribution. The chain is Monocarboxylate transporter 12-B (slc16a12b) from Danio rerio (Zebrafish).